We begin with the raw amino-acid sequence, 963 residues long: Vacuolar membrane protease (963 aa).

The Cytoplasmic segment spans residues 1–15 (MVSSRRGFNPIAFTP). A helical transmembrane segment spans residues 16 to 36 (WPVTILTSLVYLALIIPIIVV). The Vacuolar segment spans residues 37 to 391 (HHLVPPAPKQ…FQLNTLFGLS (355 aa)). N-linked (GlcNAc...) asparagine glycans are attached at residues asparagine 111 and asparagine 114. Positions 170 and 182 each coordinate Zn(2+). Glutamate 216 serves as the catalytic Proton acceptor. Residues glutamate 217, glutamate 242, and histidine 315 each contribute to the Zn(2+) site. A helical membrane pass occupies residues 392-412 (VALLVVAPLLLILTSVALFAV). Over 413–441 (DKMYMFSMYTYLSESGGQVSLYGLRGMFR) the chain is Cytoplasmic. The helical transmembrane segment at 442–462 (FPLILGISTALTVALAFLIMK) threads the bilayer. Residues 463–473 (VNPFIIYSSPY) are Vacuolar-facing. The chain crosses the membrane as a helical span at residues 474 to 494 (AVWSMMLSTCMFFAWFISCVA). The Cytoplasmic portion of the chain corresponds to 495–504 (DFARPSALHR). A helical membrane pass occupies residues 505–525 (AYAFSWMFGILWVFLVIATVY). The Vacuolar segment spans residues 526–535 (QRQHGIASSY). A helical membrane pass occupies residues 536 to 556 (FIVFYFAGVSVATWISYLELF). Residues 557–668 (GLSTTQDYAR…WSIYLVSSAW (112 aa)) are Cytoplasmic-facing. The tract at residues 569-618 (SRLSDRTPSSDSHLLAPSADELPSSGSVAGRDFNPEDVEDEEPTESTSLL) is disordered. A compositionally biased stretch (acidic residues) spans 603–612 (PEDVEDEEPT). The chain crosses the membrane as a helical span at residues 669-689 (ILQFLLVAPIVLILLGQLGLF). Topologically, residues 690–705 (LTSATYQIGADGGSQF) are vacuolar. The helical transmembrane segment at 706–726 (IIYIGIAVLSVLILLPLFPFI) threads the bilayer. Residues 727–732 (HRFTYH) lie on the Cytoplasmic side of the membrane. A helical membrane pass occupies residues 733-753 (IPTFMLFVLIGTLVYNLTAFP). The Vacuolar segment spans residues 754 to 963 (FSHNSRLKVA…LVEGSYSFKL (210 aa)). Residue asparagine 835 is glycosylated (N-linked (GlcNAc...) asparagine).

It belongs to the peptidase M28 family. Zn(2+) serves as cofactor.

It is found in the vacuole membrane. May be involved in vacuolar sorting and osmoregulation. In Arthroderma gypseum (strain ATCC MYA-4604 / CBS 118893) (Microsporum gypseum), this protein is Vacuolar membrane protease.